A 410-amino-acid chain; its full sequence is Arginine deiminase (410 aa).

Cysteine 400 acts as the Amidino-cysteine intermediate in catalysis.

Belongs to the arginine deiminase family.

It localises to the cytoplasm. The catalysed reaction is L-arginine + H2O = L-citrulline + NH4(+). Its pathway is amino-acid degradation; L-arginine degradation via ADI pathway; carbamoyl phosphate from L-arginine: step 1/2. This chain is Arginine deiminase, found in Bacillus cereus (strain G9842).